The primary structure comprises 122 residues: Large ribosomal subunit protein uL14 (122 aa).

The protein belongs to the universal ribosomal protein uL14 family. Part of the 50S ribosomal subunit. Forms a cluster with proteins L3 and L19. In the 70S ribosome, L14 and L19 interact and together make contacts with the 16S rRNA in bridges B5 and B8.

Its function is as follows. Binds to 23S rRNA. Forms part of two intersubunit bridges in the 70S ribosome. This chain is Large ribosomal subunit protein uL14, found in Trichodesmium erythraeum (strain IMS101).